Consider the following 177-residue polypeptide: ATP synthase subunit delta (177 aa).

This sequence belongs to the ATPase delta chain family. As to quaternary structure, F-type ATPases have 2 components, F(1) - the catalytic core - and F(0) - the membrane proton channel. F(1) has five subunits: alpha(3), beta(3), gamma(1), delta(1), epsilon(1). F(0) has three main subunits: a(1), b(2) and c(10-14). The alpha and beta chains form an alternating ring which encloses part of the gamma chain. F(1) is attached to F(0) by a central stalk formed by the gamma and epsilon chains, while a peripheral stalk is formed by the delta and b chains.

The protein localises to the cell inner membrane. Functionally, f(1)F(0) ATP synthase produces ATP from ADP in the presence of a proton or sodium gradient. F-type ATPases consist of two structural domains, F(1) containing the extramembraneous catalytic core and F(0) containing the membrane proton channel, linked together by a central stalk and a peripheral stalk. During catalysis, ATP synthesis in the catalytic domain of F(1) is coupled via a rotary mechanism of the central stalk subunits to proton translocation. Its function is as follows. This protein is part of the stalk that links CF(0) to CF(1). It either transmits conformational changes from CF(0) to CF(1) or is implicated in proton conduction. In Shewanella baltica (strain OS223), this protein is ATP synthase subunit delta.